We begin with the raw amino-acid sequence, 610 residues long: WD repeat-containing protein 46 (610 aa).

Residues M1–P103 form a disordered region. Residues P7 to Q19 show a composition bias toward basic and acidic residues. Residue S41 is modified to Phosphoserine. A compositionally biased stretch (basic residues) spans K65–K77. WD repeat units lie at residues L193–N234, V235–I272, R274–A312, A315–K354, C357–S396, and T399–S436. The interval E538 to R610 is disordered. Positions V572–R582 are enriched in basic and acidic residues.

In terms of assembly, part of the small subunit (SSU) processome, composed of more than 70 proteins and the RNA chaperone small nucleolar RNA (snoRNA) U3. Interacts with DDX21, NCL, NOP2 and EBNA1BP2.

Its subcellular location is the nucleus. The protein resides in the nucleolus. Its function is as follows. Scaffold component of the nucleolar structure. Required for localization of DDX21 and NCL to the granular compartment of the nucleolus. Part of the small subunit (SSU) processome, first precursor of the small eukaryotic ribosomal subunit. During the assembly of the SSU processome in the nucleolus, many ribosome biogenesis factors, an RNA chaperone and ribosomal proteins associate with the nascent pre-rRNA and work in concert to generate RNA folding, modifications, rearrangements and cleavage as well as targeted degradation of pre-ribosomal RNA by the RNA exosome. The sequence is that of WD repeat-containing protein 46 (WDR46) from Homo sapiens (Human).